The primary structure comprises 849 residues: Lysine-specific histone demethylase 1 homolog 1 (849 aa).

The tract at residues 1–118 (MEEGSEAQPP…RRRRKKQFPG (118 aa)) is disordered. Composition is skewed to low complexity over residues 34–67 (GQAA…AADA) and 89–103 (PTSS…VDDS). Residues 106–115 (ARKRRRRKKQ) are compositionally biased toward basic residues. Residues 159-260 (ARELDAEALI…FGLAPSVISL (102 aa)) form the SWIRM domain. 4 residues coordinate FAD: Glu-300, Arg-302, Arg-308, and Glu-688.

It belongs to the flavin monoamine oxidase family. FAD is required as a cofactor.

Its function is as follows. Probable histone demethylase. This Oryza sativa subsp. japonica (Rice) protein is Lysine-specific histone demethylase 1 homolog 1.